A 275-amino-acid polypeptide reads, in one-letter code: Catechol 1,2-dioxygenase 2 (275 aa).

Fe cation is bound by residues tyrosine 158, tyrosine 192, histidine 216, and histidine 218.

This sequence belongs to the intradiol ring-cleavage dioxygenase family. As to quaternary structure, homodimer. Fe(3+) is required as a cofactor.

The catalysed reaction is catechol + O2 = cis,cis-muconate + 2 H(+). Its pathway is aromatic compound metabolism; beta-ketoadipate pathway; 5-oxo-4,5-dihydro-2-furylacetate from catechol: step 1/3. Can cleave 4-methyl-, 4-chloro-, and 3-methoxycatechol at lower rates than catechol, but has no activity with 4-nitrocatechol or protocatechuic acid. The chain is Catechol 1,2-dioxygenase 2 (catA2) from Acinetobacter lwoffii.